The following is a 122-amino-acid chain: Large ribosomal subunit protein bL20 (122 aa).

It belongs to the bacterial ribosomal protein bL20 family.

Its function is as follows. Binds directly to 23S ribosomal RNA and is necessary for the in vitro assembly process of the 50S ribosomal subunit. It is not involved in the protein synthesizing functions of that subunit. In Treponema pallidum (strain Nichols), this protein is Large ribosomal subunit protein bL20 (rplT).